A 202-amino-acid chain; its full sequence is Protein G1-like4 (202 aa).

2 disordered regions span residues 1–44 and 158–202; these read MDLS…RYEA and RARG…GAAC. Over residues 12–22 the composition is skewed to gly residues; the sequence is SGGGNGGGGGS. Residues 23-36 show a composition bias toward low complexity; the sequence is SSSNSSPSMGAGAP. Residues 41 to 168 enclose the ALOG domain; that stretch reads RYEAQKRRDW…ARGVSYEKKK (128 aa). The Nuclear localization signal signature appears at 166–170; that stretch reads KKKRK. Low complexity predominate over residues 173 to 186; the sequence is QQQQLQGGDSSGLH. Pro residues predominate over residues 192–202; sequence PPPPPPAGAAC.

It belongs to the plant homeotic and developmental regulators ALOG protein family.

The protein localises to the nucleus. Functionally, probable transcription regulator that acts as a developmental regulator by promoting cell growth in response to light. The protein is Protein G1-like4 of Oryza sativa subsp. indica (Rice).